Reading from the N-terminus, the 268-residue chain is Tryptophan synthase alpha chain (268 aa).

Active-site proton acceptor residues include glutamate 47 and aspartate 58.

This sequence belongs to the TrpA family. In terms of assembly, tetramer of two alpha and two beta chains.

It is found in the plastid. The protein resides in the chloroplast. The enzyme catalyses (1S,2R)-1-C-(indol-3-yl)glycerol 3-phosphate + L-serine = D-glyceraldehyde 3-phosphate + L-tryptophan + H2O. It functions in the pathway amino-acid biosynthesis; L-tryptophan biosynthesis; L-tryptophan from chorismate: step 5/5. Its function is as follows. The alpha subunit is responsible for the aldol cleavage of indoleglycerol phosphate to indole and glyceraldehyde 3-phosphate. In Gracilaria tenuistipitata var. liui (Red alga), this protein is Tryptophan synthase alpha chain.